Here is a 132-residue protein sequence, read N- to C-terminus: Phosphoribosyl-AMP cyclohydrolase (132 aa).

Mg(2+) is bound at residue Asp86. Cys87 lines the Zn(2+) pocket. Mg(2+) contacts are provided by Asp88 and Asp90. Zn(2+)-binding residues include Cys103 and Cys110.

Belongs to the PRA-CH family. Homodimer. Mg(2+) is required as a cofactor. Zn(2+) serves as cofactor.

It localises to the cytoplasm. The catalysed reaction is 1-(5-phospho-beta-D-ribosyl)-5'-AMP + H2O = 1-(5-phospho-beta-D-ribosyl)-5-[(5-phospho-beta-D-ribosylamino)methylideneamino]imidazole-4-carboxamide. The protein operates within amino-acid biosynthesis; L-histidine biosynthesis; L-histidine from 5-phospho-alpha-D-ribose 1-diphosphate: step 3/9. Functionally, catalyzes the hydrolysis of the adenine ring of phosphoribosyl-AMP. This chain is Phosphoribosyl-AMP cyclohydrolase, found in Haloquadratum walsbyi (strain DSM 16790 / HBSQ001).